We begin with the raw amino-acid sequence, 202 residues long: Rho GDP-dissociation inhibitor (202 aa).

The residue at position 2 (alanine 2) is an N-acetylalanine. At threonine 27 the chain carries Phosphothreonine. The residue at position 40 (serine 40) is a Phosphoserine.

It belongs to the Rho GDI family.

It localises to the cytoplasm. Functionally, regulates the GDP/GTP exchange reaction of the Rho proteins by inhibiting the dissociation of GDP from them, and the subsequent binding of GTP to them. The polypeptide is Rho GDP-dissociation inhibitor (RDI1) (Saccharomyces cerevisiae (strain ATCC 204508 / S288c) (Baker's yeast)).